Here is a 440-residue protein sequence, read N- to C-terminus: Glycerate 2-kinase (440 aa).

Lys58 is a substrate binding site.

Belongs to the glycerate kinase type-1 family. As to quaternary structure, homodimer. The cofactor is Mg(2+). Ni(2+) serves as cofactor. It depends on Mn(2+) as a cofactor. Co(2+) is required as a cofactor.

It catalyses the reaction (R)-glycerate + ATP = (2R)-2-phosphoglycerate + ADP + H(+). Catalyzes the ATP-dependent phosphorylation of D-glycerate to 2-phosphoglycerate. It can also utilize GTP, CTP, UTP, ADP or pyrophosphate as phosphate donor. In Pyrococcus horikoshii (strain ATCC 700860 / DSM 12428 / JCM 9974 / NBRC 100139 / OT-3), this protein is Glycerate 2-kinase (gck).